A 226-amino-acid chain; its full sequence is 2-amino-5-formylamino-6-ribosylaminopyrimidin-4(3H)-one 5'-monophosphate deformylase (226 aa).

Residues Glu29, His31, Asp40, and His108 each contribute to the Fe cation site.

Belongs to the creatininase superfamily. FAPy deformylase family. As to quaternary structure, homodimer. Fe(2+) is required as a cofactor. The cofactor is Zn(2+).

The enzyme catalyses 2-amino-5-formylamino-6-(5-phospho-D-ribosylamino)pyrimidin-4(3H)-one + H2O = 2,5-diamino-6-(1-D-ribosylamino)pyrimidin-4(3H)-one 5'-phosphate + formate + H(+). It functions in the pathway cofactor biosynthesis; coenzyme F420 biosynthesis. It participates in cofactor biosynthesis; riboflavin biosynthesis. In terms of biological role, catalyzes the hydrolysis of the formamide of 2-amino-5-formylamino-6-ribosylamino-4(3H)-pyrimidinone 5'-monophosphate (FAPy) to form 2,5-diamino-6-ribosylamino-4(3H)-pyrimidinone 5'-phosphate (APy). This is 2-amino-5-formylamino-6-ribosylaminopyrimidin-4(3H)-one 5'-monophosphate deformylase from Methanocaldococcus vulcanius (strain ATCC 700851 / DSM 12094 / M7) (Methanococcus vulcanius).